The following is a 181-amino-acid chain: MPKGGRKGGHKGRVRQYTSPEEIDAQLQAEKQKANEEDEQEEGGDGASGDPKKEKKSLDSDESEDEDDDYQQKRKGVEGLIDIENPNRVAQTTKKVTQLDLDGPKELSRREREEIEKQKAKERYMKMHLAGKTEQAKADLARLAIIRKQREEAARKKEEERKAKDDATLSGKRMQSLSLNK.

A compositionally biased stretch (basic residues) spans 1–14; the sequence is MPKGGRKGGHKGRV. Residues 1-118 form a disordered region; the sequence is MPKGGRKGGH…RREREEIEKQ (118 aa). A Phosphothreonine modification is found at Thr18. The residue at position 19 (Ser19) is a Phosphoserine. A compositionally biased stretch (basic and acidic residues) spans 50–59; sequence DPKKEKKSLD. Lys52 participates in a covalent cross-link: Glycyl lysine isopeptide (Lys-Gly) (interchain with G-Cter in SUMO2). Phosphoserine occurs at positions 57, 60, and 63. Residues 60–69 are compositionally biased toward acidic residues; that stretch reads SDESEDEDDD. Position 70 is a phosphotyrosine (Tyr70). The segment covering 102-118 has biased composition (basic and acidic residues); it reads DGPKELSRREREEIEKQ. Lys126 is subject to N6-methyllysine. An N6-acetyllysine mark is found at Lys132 and Lys164. Residues 151-167 are compositionally biased toward basic and acidic residues; it reads EEAARKKEEERKAKDDA. Residues 151-181 are disordered; that stretch reads EEAARKKEEERKAKDDATLSGKRMQSLSLNK. A phosphoserine mark is found at Ser176 and Ser178.

This sequence belongs to the PDAP1 family. Phosphorylated by several kinases in vitro. In vivo, can be phosphorylated by CK2. In terms of tissue distribution, present in all tissues tested, including brain, lung, spleen, kidney, liver, heart, and muscle, in decreasing order of abundance.

The protein is 28 kDa heat- and acid-stable phosphoprotein (Pdap1) of Rattus norvegicus (Rat).